The chain runs to 310 residues: Protein BIG GRAIN 1 (310 aa).

The tract at residues serine 77–serine 140 is disordered. Residues serine 90–alanine 106 show a composition bias toward low complexity.

It belongs to the BIG GRAIN 1 (BG1) plant protein family. In terms of tissue distribution, mostly expressed in the vascular tissues of leaves, culms and young panicles, especially in hulls.

Its subcellular location is the cell membrane. Involved in auxin transport. Positive regulator of the auxin signaling pathway involved in gravitropism, plant growth and grain development. The chain is Protein BIG GRAIN 1 from Oryza sativa subsp. japonica (Rice).